The chain runs to 931 residues: NEDD4-binding protein 1 (931 aa).

Residues Gly75 to Asn159 form the KH-like domain. 3 disordered regions span residues Met289–Ser329, Gln413–Asp474, and Cys547–Ser571. Composition is skewed to basic and acidic residues over residues Thr290–Pro309 and Gln319–Ser329. Over residues Ser416 to Ser434 the composition is skewed to polar residues. Basic and acidic residues-rich tracts occupy residues His435–Cys444 and Asn456–Asp467. Over residues Cys547 to His557 the composition is skewed to polar residues. Residues Leu659–Asp811 enclose the RNase NYN domain. Positions Leu841–His863 are disordered. Residues Arg884 to Asp931 are coCUN.

This sequence belongs to the N4BP1 family.

It is found in the cytoplasm. The protein resides in the cytosol. The protein localises to the nucleus. It localises to the nucleolus. Its subcellular location is the PML body. Functionally, potent suppressor of cytokine production that acts as a regulator of innate immune signaling and inflammation. Acts as a key negative regulator of select cytokine and chemokine responses elicited by TRIF-independent Toll-like receptors (TLRs), thereby limiting inflammatory cytokine responses to minor insults. Has ribonuclease activity. This chain is NEDD4-binding protein 1, found in Gallus gallus (Chicken).